The following is a 529-amino-acid chain: UDP-glucuronosyltransferase 2B18 (529 aa).

The first 21 residues, 1 to 21 (MSVKWTSVILLIQLSFYFSSG), serve as a signal peptide directing secretion. 2 N-linked (GlcNAc...) asparagine glycosylation sites follow: asparagine 67 and asparagine 68. Residues 493 to 513 (VIGFLLACVATVIFIIMKCCL) traverse the membrane as a helical segment.

Belongs to the UDP-glycosyltransferase family. Expressed in liver, prostate, kidney, testis, adrenal, bile duct, bladder, colon, small intestine, cerebellum and pancreas.

It is found in the microsome membrane. Its subcellular location is the endoplasmic reticulum membrane. The enzyme catalyses glucuronate acceptor + UDP-alpha-D-glucuronate = acceptor beta-D-glucuronoside + UDP + H(+). Functionally, UDPGT is of major importance in the conjugation and subsequent elimination of potentially toxic xenobiotics and endogenous compounds. This isozyme displays activity toward 3-hydroxyandrogens. It is principally active on C19 steroids having a hydroxyl group at position 3-alpha of the steroid molecule and also active on planar phenols and bile acids. The polypeptide is UDP-glucuronosyltransferase 2B18 (UGT2B18) (Macaca fascicularis (Crab-eating macaque)).